The sequence spans 183 residues: Ribosome rescue factor SmrB (183 aa).

In terms of domain architecture, Smr spans 98-173; that stretch reads LDLHGLTQLQ…GDAALLVLIE (76 aa).

Belongs to the SmrB family. As to quaternary structure, associates with collided ribosomes, but not with correctly translating polysomes.

Its function is as follows. Acts as a ribosome collision sensor. Detects stalled/collided disomes (pairs of ribosomes where the leading ribosome is stalled and a second ribosome has collided with it) and endonucleolytically cleaves mRNA at the 5' boundary of the stalled ribosome. Stalled/collided disomes form a new interface (primarily via the 30S subunits) that binds SmrB. Cleaved mRNA becomes available for tmRNA ligation, leading to ribosomal subunit dissociation and rescue of stalled ribosomes. In Salmonella paratyphi A (strain ATCC 9150 / SARB42), this protein is Ribosome rescue factor SmrB.